Consider the following 152-residue polypeptide: Urease accessory protein UreE (152 aa).

It belongs to the UreE family.

It is found in the cytoplasm. Involved in urease metallocenter assembly. Binds nickel. Probably functions as a nickel donor during metallocenter assembly. This Enterobacter sp. (strain 638) protein is Urease accessory protein UreE.